The following is a 183-amino-acid chain: ATP synthase subunit delta (183 aa).

The protein belongs to the ATPase delta chain family. F-type ATPases have 2 components, F(1) - the catalytic core - and F(0) - the membrane proton channel. F(1) has five subunits: alpha(3), beta(3), gamma(1), delta(1), epsilon(1). F(0) has three main subunits: a(1), b(2) and c(10-14). The alpha and beta chains form an alternating ring which encloses part of the gamma chain. F(1) is attached to F(0) by a central stalk formed by the gamma and epsilon chains, while a peripheral stalk is formed by the delta and b chains.

The protein resides in the cell inner membrane. Its function is as follows. F(1)F(0) ATP synthase produces ATP from ADP in the presence of a proton or sodium gradient. F-type ATPases consist of two structural domains, F(1) containing the extramembraneous catalytic core and F(0) containing the membrane proton channel, linked together by a central stalk and a peripheral stalk. During catalysis, ATP synthesis in the catalytic domain of F(1) is coupled via a rotary mechanism of the central stalk subunits to proton translocation. Functionally, this protein is part of the stalk that links CF(0) to CF(1). It either transmits conformational changes from CF(0) to CF(1) or is implicated in proton conduction. This chain is ATP synthase subunit delta, found in Thermosipho africanus (strain TCF52B).